The sequence spans 416 residues: MFSFYFNDNKITKLLMVGYGSTGKSVCDFLANFIDITVDISQNDDEFVNYDLNSYDLITVSPGIPLNKSPYRALTKFKDKIVSDIDIFYQYIKDTKAKTIAVTGSNGKSTVVTMTDFVLKDLGYKSILVGNIGTPALNKIGEKFDYCVVEVSSFQINLFNCVRFDLGCIINVSPDHLDRYQNFEQYKQSKLNLAKFSNDFFVYDVHNGIKYAGEYQIIRGAIYRNSTKLLDIVETKLFGEHNLENIIVVLNILDRLGLDINQAIASIKKFKGLEHRCKIVKKVNGTTYINDSKGTNVGATIAALNSITNSKNIILLLGGVAKGGDFSLMIKSLDKYVKYVYIYGADKEYIESYIKGYCKYQLCNNMKQAFELASQKANSNEIVLLSPACASFDEFSGYAQRGEVFQNLVAQLEQKS.

104–110 (GSNGKST) serves as a coordination point for ATP.

It belongs to the MurCDEF family.

It localises to the cytoplasm. It catalyses the reaction UDP-N-acetyl-alpha-D-muramoyl-L-alanine + D-glutamate + ATP = UDP-N-acetyl-alpha-D-muramoyl-L-alanyl-D-glutamate + ADP + phosphate + H(+). It functions in the pathway cell wall biogenesis; peptidoglycan biosynthesis. Cell wall formation. Catalyzes the addition of glutamate to the nucleotide precursor UDP-N-acetylmuramoyl-L-alanine (UMA). The sequence is that of UDP-N-acetylmuramoylalanine--D-glutamate ligase from Francisella tularensis subsp. tularensis (strain WY96-3418).